Here is a 374-residue protein sequence, read N- to C-terminus: Ribosomal RNA large subunit methyltransferase G (374 aa).

It belongs to the methyltransferase superfamily. RlmG family.

The protein localises to the cytoplasm. It catalyses the reaction guanosine(1835) in 23S rRNA + S-adenosyl-L-methionine = N(2)-methylguanosine(1835) in 23S rRNA + S-adenosyl-L-homocysteine + H(+). Its function is as follows. Specifically methylates the guanine in position 1835 (m2G1835) of 23S rRNA. This Pseudomonas fluorescens (strain Pf0-1) protein is Ribosomal RNA large subunit methyltransferase G.